A 225-amino-acid chain; its full sequence is Single-pass membrane and coiled-coil domain-containing protein 3 (225 aa).

The stretch at 62-92 (IKENCDLIIQAIMKIQKELQKVDEALKDKLE) forms a coiled coil. Residues 155–175 (IGASLLGSIGVAVLGLGIDMI) form a helical membrane-spanning segment. Residues 183 to 207 (VEKTQLQAAIKSYEKHLVEFKSASE) adopt a coiled-coil conformation.

The protein resides in the membrane. This Homo sapiens (Human) protein is Single-pass membrane and coiled-coil domain-containing protein 3 (SMCO3).